The chain runs to 117 residues: Mediator of RNA polymerase II transcription subunit 11 (117 aa).

The residue at position 2 (Ala2) is an N-acetylalanine.

This sequence belongs to the Mediator complex subunit 11 family. In terms of assembly, component of the Mediator complex, which is composed of MED1, MED4, MED6, MED7, MED8, MED9, MED10, MED11, MED12, MED13, MED13L, MED14, MED15, MED16, MED17, MED18, MED19, MED20, MED21, MED22, MED23, MED24, MED25, MED26, MED27, MED29, MED30, MED31, CCNC, CDK8 and CDC2L6/CDK11. The MED12, MED13, CCNC and CDK8 subunits form a distinct module termed the CDK8 module. Mediator containing the CDK8 module is less active than Mediator lacking this module in supporting transcriptional activation. Individual preparations of the Mediator complex lacking one or more distinct subunits have been variously termed ARC, CRSP, DRIP, PC2, SMCC and TRAP. In terms of tissue distribution, expressed in cochlea.

It is found in the nucleus. Functionally, component of the Mediator complex, a coactivator involved in the regulated transcription of nearly all RNA polymerase II-dependent genes. Mediator functions as a bridge to convey information from gene-specific regulatory proteins to the basal RNA polymerase II transcription machinery. Mediator is recruited to promoters by direct interactions with regulatory proteins and serves as a scaffold for the assembly of a functional pre-initiation complex with RNA polymerase II and the general transcription factors. This is Mediator of RNA polymerase II transcription subunit 11 (Med11) from Mus musculus (Mouse).